The primary structure comprises 185 residues: Ribosome-recycling factor (185 aa).

It belongs to the RRF family.

The protein resides in the cytoplasm. In terms of biological role, responsible for the release of ribosomes from messenger RNA at the termination of protein biosynthesis. May increase the efficiency of translation by recycling ribosomes from one round of translation to another. This Laribacter hongkongensis (strain HLHK9) protein is Ribosome-recycling factor.